The sequence spans 563 residues: Inositol-3-phosphate synthase 1-B (563 aa).

It belongs to the myo-inositol 1-phosphate synthase family. NAD(+) is required as a cofactor.

It localises to the cytoplasm. The catalysed reaction is D-glucose 6-phosphate = 1D-myo-inositol 3-phosphate. It participates in polyol metabolism; myo-inositol biosynthesis; myo-inositol from D-glucose 6-phosphate: step 1/2. In terms of biological role, key enzyme in myo-inositol biosynthesis pathway that catalyzes the conversion of glucose 6-phosphate to 1-myo-inositol 1-phosphate in a NAD-dependent manner. Rate-limiting enzyme in the synthesis of all inositol-containing compounds. This chain is Inositol-3-phosphate synthase 1-B (isyna1-b), found in Xenopus laevis (African clawed frog).